We begin with the raw amino-acid sequence, 342 residues long: Manganese-dependent ADP-ribose/CDP-alcohol diphosphatase (342 aa).

Residue Met1 is modified to N-acetylmethionine. 7 residues coordinate Zn(2+): Asp25, Gln27, Asp74, Asn110, His241, His278, and His280.

It belongs to the ADPRibase-Mn family. In terms of assembly, monomer. Mg(2+) is required as a cofactor.

The catalysed reaction is CDP-choline + H2O = phosphocholine + CMP + 2 H(+). It carries out the reaction ADP-D-ribose + H2O = D-ribose 5-phosphate + AMP + 2 H(+). It catalyses the reaction CDP-glycerol + H2O = sn-glycerol 3-phosphate + CMP + 2 H(+). Its function is as follows. Hydrolyzes ADP-ribose, IDP-ribose, CDP-glycerol, CDP-choline and CDP-ethanolamine, but not other non-reducing ADP-sugars or CDP-glucose. May be involved in immune cell signaling as suggested by the second-messenger role of ADP-ribose, which activates TRPM2 as a mediator of oxidative/nitrosative stress. The chain is Manganese-dependent ADP-ribose/CDP-alcohol diphosphatase (ADPRM) from Homo sapiens (Human).